Here is a 389-residue protein sequence, read N- to C-terminus: Sterol methyltransferase-like 1 (389 aa).

A helical membrane pass occupies residues 25–45 (IAAGVTAAVVIGGYIWIITEL).

This sequence belongs to the class I-like SAM-binding methyltransferase superfamily. Erg6/SMT family.

The protein resides in the microsome membrane. Unable to convert squalene, botryococcene, cycloartenol, zymosterol or lanosterol to mono-, di-, tri- or tetramethylated derivatives. This Botryococcus braunii (Green alga) protein is Sterol methyltransferase-like 1 (SMT-1).